Consider the following 981-residue polypeptide: MRSYEFHLARMSGATLCVVTGYRLLTSKWLADRIEDYRQRVIADRKKIIRDAAMIRTSVQKQMELVRISVRKGHSHQEAATERNSATETMLSVVEKSGYEPYIISPSPREAEYHGSRQFYSLADFRQDYRRDEITDRHIIVMTDVDYYVDMNELIGLGVPVLMYTFQPSTVSGEVKDGYFTITDDSVHYRVAGGKDVRHRIWNYNQDTMYTVSRPTGFWENLKRILRDITGITALCGFLYNKLGMAPFGDPVTMFTVDQFKMGEHRNIVSIVPFATCRSNLLKISEYGAELEYMRYQQRNNIANFNAVTYISEEGPLISLGLEGNFASVQLPLQDFENVRTAYELSKTNNLSDTVRRSGRPCKEAAIIHKCLQAECVLASEVVHKPGDLARHYQAVGSLYDVDPAEQGKCYAREYAPGPLTQTAVFPNESRSNERATIDGRIAGPQAKAKSREHITPRMRKVARDFVRHLVPEAGLGRPYPLTYVEEQQSKPLQRARNDANRYHDEFTMIVKAFQKKEAYNAPNYPRNISTVPHNQNVKLSSYTYAFKASTLQHVPWYMPTHTPAEIADAVQNLAASTTELVETDYSKFDGTFLRFMRECVEFAIYKRWVHLDHLAELSQLLANELQAPAVTRLGLKYDPDCSRLSGSALTTDGNSIANAFVSYLANRLAGMDDDEAWSWIGIVYGDDGLRSGNVSDTLLTDTASSLGFDLKIVNRAPRGSPVTFLARVYLDPWSSPASVQSPFRTLLKLHTTCDTQSEIEDIGWAKTQAYLVTDCKTPFIGHWCRAYQRNCTARVVQYADYNDIPFWVKNDDHLGNSWPQSDSVDWNDVVANELGLTTAELLKHIALLEAYTGPTSGLPRLTTSIDLEPKMSVALDGEVQAGPSQQQTDKDGTNPTGDRSAPRRARTALPGVDGHTRCTRRSDRGPGERDANVRDKRPRRSMPPSRSVSSVPPPSSSGGGADGDRVEGAARPRRQRRTPV.

One can recognise a RdRp catalytic domain in the interval 579-701; that stretch reads TELVETDYSK…SGNVSDTLLT (123 aa). A disordered region spans residues 879–981; sequence EVQAGPSQQQ…RPRRQRRTPV (103 aa). Residues 883-898 are compositionally biased toward polar residues; sequence GPSQQQTDKDGTNPTG. Residues 915–936 show a composition bias toward basic and acidic residues; the sequence is GHTRCTRRSDRGPGERDANVRD. Over residues 972 to 981 the composition is skewed to basic residues; that stretch reads RPRRQRRTPV.

Belongs to the nodaviridae RNA polymerase family.

The enzyme catalyses RNA(n) + a ribonucleoside 5'-triphosphate = RNA(n+1) + diphosphate. Functionally, RNA-dependent RNA polymerase which replicates the viral genome composed of 2 RNA segments, RNA1 and RNA2. The polypeptide is RNA-directed RNA polymerase (Atlantic halibut nervous necrosis virus (AhNNV)).